The sequence spans 122 residues: UPF0102 protein TTE1452 (122 aa).

It belongs to the UPF0102 family.

The chain is UPF0102 protein TTE1452 from Caldanaerobacter subterraneus subsp. tengcongensis (strain DSM 15242 / JCM 11007 / NBRC 100824 / MB4) (Thermoanaerobacter tengcongensis).